Consider the following 449-residue polypeptide: FAD-linked oxidoreductase janO (449 aa).

Residues 32 to 203 (PDAQPLAIIK…TRFHLNTRPL (172 aa)) enclose the FAD-binding PCMH-type domain.

It belongs to the oxygen-dependent FAD-linked oxidoreductase family. FAD serves as cofactor.

The protein operates within secondary metabolite biosynthesis. Functionally, FAD-linked oxidoreductase; part of the gene cluster that mediates the biosynthesis of the indole diterpenes janthitremanes such as shearinine K or shearinine A. The geranylgeranyl diphosphate (GGPP) synthase janG catalyzes the first step in janthitremane biosynthesis via conversion of farnesyl pyrophosphate and isopentyl pyrophosphate into geranylgeranyl pyrophosphate (GGPP). Condensation of indole-3-glycerol phosphate with GGPP by the prenyl transferase janC then forms 3-geranylgeranylindole (3-GGI). Epoxidation by the FAD-dependent monooxygenase janM leads to a epoxidized-GGI that is substrate of the terpene cyclase janB for cyclization to yield paspaline. Paspaline is subsequently converted to 13-desoxypaspaline by the cytochrome P450 monooxygenase janP, via beta-PC-M6 in a series of alpha-face oxidations. The cytochrome P450 monooxygenase janQ is proposed to carry out sequential beta-face oxidation steps at C-7 and C-13 of 13-desoxypaspaline to form paspalicine and paspalinine respectively. The indole diterpene prenyltransferase janD may then convert paspalinine into shearinine K which is substrate of janO and/or additional enzymes for oxidation and cyclization to generate shearinine A. In Penicillium janthinellum (Penicillium vitale), this protein is FAD-linked oxidoreductase janO.